The sequence spans 208 residues: Uracil phosphoribosyltransferase (208 aa).

5-phospho-alpha-D-ribose 1-diphosphate-binding positions include R78, R103, and D130–S138. Residues I193 and G198–A200 contribute to the uracil site. Residue D199 coordinates 5-phospho-alpha-D-ribose 1-diphosphate.

This sequence belongs to the UPRTase family. Mg(2+) serves as cofactor.

The catalysed reaction is UMP + diphosphate = 5-phospho-alpha-D-ribose 1-diphosphate + uracil. It functions in the pathway pyrimidine metabolism; UMP biosynthesis via salvage pathway; UMP from uracil: step 1/1. Allosterically activated by GTP. Catalyzes the conversion of uracil and 5-phospho-alpha-D-ribose 1-diphosphate (PRPP) to UMP and diphosphate. The chain is Uracil phosphoribosyltransferase from Roseiflexus sp. (strain RS-1).